The following is a 504-amino-acid chain: ATP synthase subunit alpha, chloroplastic (504 aa).

170–177 serves as a coordination point for ATP; it reads GDRQTGKT.

This sequence belongs to the ATPase alpha/beta chains family. In terms of assembly, F-type ATPases have 2 components, CF(1) - the catalytic core - and CF(0) - the membrane proton channel. CF(1) has five subunits: alpha(3), beta(3), gamma(1), delta(1), epsilon(1). CF(0) has four main subunits: a, b, b' and c.

Its subcellular location is the plastid. It localises to the chloroplast thylakoid membrane. It catalyses the reaction ATP + H2O + 4 H(+)(in) = ADP + phosphate + 5 H(+)(out). Its function is as follows. Produces ATP from ADP in the presence of a proton gradient across the membrane. The alpha chain is a regulatory subunit. The protein is ATP synthase subunit alpha, chloroplastic of Ostreococcus tauri.